We begin with the raw amino-acid sequence, 195 residues long: Pyridoxal 5'-phosphate synthase subunit PdxT (195 aa).

46-48 (GES) provides a ligand contact to L-glutamine. The active-site Nucleophile is Cys78. Residues Arg107 and 135–136 (IR) each bind L-glutamine. Catalysis depends on charge relay system residues His172 and Glu174.

Belongs to the glutaminase PdxT/SNO family. As to quaternary structure, in the presence of PdxS, forms a dodecamer of heterodimers. Only shows activity in the heterodimer.

It catalyses the reaction aldehydo-D-ribose 5-phosphate + D-glyceraldehyde 3-phosphate + L-glutamine = pyridoxal 5'-phosphate + L-glutamate + phosphate + 3 H2O + H(+). The catalysed reaction is L-glutamine + H2O = L-glutamate + NH4(+). It functions in the pathway cofactor biosynthesis; pyridoxal 5'-phosphate biosynthesis. Catalyzes the hydrolysis of glutamine to glutamate and ammonia as part of the biosynthesis of pyridoxal 5'-phosphate. The resulting ammonia molecule is channeled to the active site of PdxS. The sequence is that of Pyridoxal 5'-phosphate synthase subunit PdxT from Corynebacterium jeikeium (strain K411).